Reading from the N-terminus, the 213-residue chain is Probable septum site-determining protein MinC (213 aa).

Belongs to the MinC family. As to quaternary structure, interacts with MinD and FtsZ.

In terms of biological role, cell division inhibitor that blocks the formation of polar Z ring septums. Rapidly oscillates between the poles of the cell to destabilize FtsZ filaments that have formed before they mature into polar Z rings. Prevents FtsZ polymerization. The chain is Probable septum site-determining protein MinC from Pseudothermotoga lettingae (strain ATCC BAA-301 / DSM 14385 / NBRC 107922 / TMO) (Thermotoga lettingae).